Consider the following 27-residue polypeptide: Metallothionein-like protein CAP5 (27 aa).

Over residues 1 to 18 (MAPCSCKSCGTSCAGSCT) the composition is skewed to low complexity. Residues 1–27 (MAPCSCKSCGTSCAGSCTSCSCGSCSH) form a disordered region. Cys4, Cys6, Cys9, Cys13, Cys20, Cys22, and Cys25 together coordinate Cu(+).

This sequence belongs to the metallothionein superfamily. Type 8 family.

The polypeptide is Metallothionein-like protein CAP5 (CAP5) (Colletotrichum gloeosporioides (Anthracnose fungus)).